The following is a 542-amino-acid chain: Putative cysteine ligase BshC (542 aa).

The stretch at 458–479 forms a coiled coil; the sequence is LTKNATLLQAQIDFLHQTLQRA.

This sequence belongs to the BshC family.

Functionally, involved in bacillithiol (BSH) biosynthesis. May catalyze the last step of the pathway, the addition of cysteine to glucosamine malate (GlcN-Mal) to generate BSH. This is Putative cysteine ligase BshC from Geobacillus sp. (strain WCH70).